We begin with the raw amino-acid sequence, 359 residues long: Aminomethyltransferase (359 aa).

It belongs to the GcvT family. In terms of assembly, the glycine cleavage system is composed of four proteins: P, T, L and H.

The enzyme catalyses N(6)-[(R)-S(8)-aminomethyldihydrolipoyl]-L-lysyl-[protein] + (6S)-5,6,7,8-tetrahydrofolate = N(6)-[(R)-dihydrolipoyl]-L-lysyl-[protein] + (6R)-5,10-methylene-5,6,7,8-tetrahydrofolate + NH4(+). Its function is as follows. The glycine cleavage system catalyzes the degradation of glycine. The protein is Aminomethyltransferase of Idiomarina loihiensis (strain ATCC BAA-735 / DSM 15497 / L2-TR).